The chain runs to 412 residues: Isocitrate dehydrogenase [NADP] (412 aa).

Thr-100 contacts NADP(+). Residues Ser-109, Asn-111, Arg-115, Arg-125, and Arg-149 each coordinate D-threo-isocitrate. Asp-301 provides a ligand contact to Mg(2+). Residues 333 to 339 (HGSAPKY), Asn-346, Tyr-385, and Arg-389 contribute to the NADP(+) site.

Belongs to the isocitrate and isopropylmalate dehydrogenases family. Homodimer. Mg(2+) is required as a cofactor. Mn(2+) serves as cofactor.

It carries out the reaction D-threo-isocitrate + NADP(+) = 2-oxoglutarate + CO2 + NADPH. In terms of biological role, catalyzes the oxidative decarboxylation of isocitrate to 2-oxoglutarate and carbon dioxide with the concomitant reduction of NADP(+). NAD(+) can replace NADP(+) with low efficiency. This Archaeoglobus fulgidus (strain ATCC 49558 / DSM 4304 / JCM 9628 / NBRC 100126 / VC-16) protein is Isocitrate dehydrogenase [NADP].